The chain runs to 43 residues: Protein PsbN (43 aa).

The helical transmembrane segment at 7-29 threads the bilayer; the sequence is ITIFLSGLLVSFTGYALYTAFGQ.

It belongs to the PsbN family.

Its subcellular location is the plastid membrane. Functionally, may play a role in photosystem I and II biogenesis. The chain is Protein PsbN from Cuscuta reflexa (Southern Asian dodder).